A 99-amino-acid polypeptide reads, in one-letter code: NADH-quinone oxidoreductase subunit K (99 aa).

3 helical membrane passes run 3–23, 28–48, and 62–82; these read PANYLILSGLLFTIGATGVLV, IVVFMSIELMLNAVNLTLVTF, and FFVMVVAAAEVVVGLAIILAI.

Belongs to the complex I subunit 4L family. As to quaternary structure, NDH-1 is composed of 14 different subunits. Subunits NuoA, H, J, K, L, M, N constitute the membrane sector of the complex.

It localises to the cell membrane. The catalysed reaction is a quinone + NADH + 5 H(+)(in) = a quinol + NAD(+) + 4 H(+)(out). NDH-1 shuttles electrons from NADH, via FMN and iron-sulfur (Fe-S) centers, to quinones in the respiratory chain. The immediate electron acceptor for the enzyme in this species is believed to be a menaquinone. Couples the redox reaction to proton translocation (for every two electrons transferred, four hydrogen ions are translocated across the cytoplasmic membrane), and thus conserves the redox energy in a proton gradient. This is NADH-quinone oxidoreductase subunit K from Parafrankia sp. (strain EAN1pec).